A 598-amino-acid chain; its full sequence is MSIQVLSDVLISQIAAGEVVERPAAALKEILENSLDAGATAIDVELEQGGVKRIRVSDDGVGIPRDELALALTRHATSKIATLADLEQVASLGFRGEALASIASVARVRLTSRHAGSDHAWTIHVDGGPLQPSSPAARSGGTTIDIEDMFFNTPARRKFLKTEATEYAHCAETVRRLALAWPQVAFTLVHNGRAQLRLKAEAAAARVRHVLGEVFEQHAIAVDAAAGALRLSGWVVRPVAATASRDAQHVFVNGRYVRDKLIVHALREAYRDVLHHQLNPAYCLFVELPPEHVDVNVHPAKTEIRFRDSRGVHQFLYHAVERLLAAPVAPAAPPSGPDARPPTFLQPRQAAMSLQVEEAMAFYAPFAAMAPGEGDEARHVPQASAAGLAGRAGPPRAFASDSSAVPPLGYALGQLHGVYVLAQNAHGLVLVDMHAAHERVVYEKLKTALDRRAVPAQALLIPVALTADPREVAEIAPHLDQLREIGFELSITSPNSVAVRAVPSLLKNADPVELTRAILAEIAEFGVARLLAERRNELLATLACHGAVRAHRTLSVPEMNALLREMEATERAGQCNHGRPTWFQLRLDELDAMFMRGR.

The protein belongs to the DNA mismatch repair MutL/HexB family.

Its function is as follows. This protein is involved in the repair of mismatches in DNA. It is required for dam-dependent methyl-directed DNA mismatch repair. May act as a 'molecular matchmaker', a protein that promotes the formation of a stable complex between two or more DNA-binding proteins in an ATP-dependent manner without itself being part of a final effector complex. In Thiobacillus denitrificans (strain ATCC 25259 / T1), this protein is DNA mismatch repair protein MutL.